The following is a 517-amino-acid chain: Serine hydroxymethyltransferase 1, mitochondrial (517 aa).

A mitochondrion-targeting transit peptide spans 1-30; that stretch reads MAMAMALRRLSSSIDKPIRPLIRSTSCYMS. Lys-286 is subject to N6-(pyridoxal phosphate)lysine.

It belongs to the SHMT family. Homotetramer. Interacts with GLU1. Interacts with UBP16. The cofactor is pyridoxal 5'-phosphate. In terms of processing, ubiquitinated. As to expression, ubiquitous. Mostly expressed in leaves, less abundant in stems, flowers and siliques, and barely detectable in roots.

It is found in the mitochondrion. The protein resides in the cytoplasm. The enzyme catalyses (6R)-5,10-methylene-5,6,7,8-tetrahydrofolate + glycine + H2O = (6S)-5,6,7,8-tetrahydrofolate + L-serine. Its pathway is one-carbon metabolism; tetrahydrofolate interconversion. Functionally, functions in the photorespiratory pathway in catalyzing the interconversion of serine and glycine. Involved in controlling cell damage caused by abiotic stress, such as high light and salt and the hypersensitive defense response of plants. The sequence is that of Serine hydroxymethyltransferase 1, mitochondrial from Arabidopsis thaliana (Mouse-ear cress).